Consider the following 94-residue polypeptide: Non-specific lipid-transfer protein 1 (94 aa).

Cystine bridges form between cysteine 4/cysteine 53, cysteine 14/cysteine 30, cysteine 31/cysteine 76, and cysteine 51/cysteine 90.

Its function is as follows. Plant non-specific lipid-transfer proteins transfer phospholipids as well as galactolipids across membranes. May play a role in wax or cutin deposition in the cell walls of expanding epidermal cells and certain secretory tissues. In Amaranthus hypochondriacus (Prince-of-Wales feather), this protein is Non-specific lipid-transfer protein 1.